The primary structure comprises 176 residues: Vitamin K epoxide reductase complex subunit 1-like protein 1 (176 aa).

Residues 1–13 (MAAPVLLRVSVPR) are Cytoplasmic-facing. Residues 14–36 (WERVARYAVCAAGILLSIYAYHV) form a helical membrane-spanning segment. Over 37-87 (EREKERDPEHRALCDLGPWVKCSAALASRWGRGFGLLGSIFGKDGVLNQPN) the chain is Lumenal. The cysteines at positions 50 and 58 are disulfide-linked. Asn87 lines the (S)-warfarin pocket. A helical transmembrane segment spans residues 88-102 (SVFGLIFYILQLLLG). Over 103–107 (MTASA) the chain is Cytoplasmic. Residues 108-135 (VAALILMTSSIMSVVGSLYLAYILYFVL) form a helical membrane-spanning segment. At 136 to 138 (KEF) the chain is on the lumenal side. A disulfide bond links Cys139 and Cys142. Residues 139 to 160 (CIICIVTYVLNFLLLIINYKRL) form a helical membrane-spanning segment. Phylloquinone-binding residues include Cys142 and Tyr146. A (S)-warfarin-binding site is contributed by Tyr146. Over 161–176 (VYLNEAWKRQLQPKQD) the chain is Cytoplasmic.

Belongs to the VKOR family.

It is found in the endoplasmic reticulum membrane. It catalyses the reaction phylloquinone + [protein]-disulfide + H2O = 2,3-epoxyphylloquinone + [protein]-dithiol. The catalysed reaction is phylloquinol + [protein]-disulfide = phylloquinone + [protein]-dithiol. With respect to regulation, inhibited by warfarin (coumadin). Warfarin locks VKORC1 in both redox states into the closed conformation. Involved in vitamin K metabolism. Can reduce inactive vitamin K 2,3-epoxide to active vitamin K, and may contribute to vitamin K-mediated protection against oxidative stress. Plays a role in vitamin K-dependent gamma-carboxylation of Glu residues in target proteins. In Homo sapiens (Human), this protein is Vitamin K epoxide reductase complex subunit 1-like protein 1 (VKORC1L1).